Reading from the N-terminus, the 600-residue chain is Adenine deaminase (600 aa).

It belongs to the metallo-dependent hydrolases superfamily. Adenine deaminase family. Mn(2+) is required as a cofactor.

It carries out the reaction adenine + H2O + H(+) = hypoxanthine + NH4(+). The protein is Adenine deaminase of Bradyrhizobium sp. (strain BTAi1 / ATCC BAA-1182).